Reading from the N-terminus, the 520-residue chain is BTB/POZ domain-containing protein At3g50780 (520 aa).

Residues 43-68 (SHNSLTKHKQSSPALQPPKPEKKPSS) are disordered. The BTB domain maps to 127–196 (AKVILVGKQG…MYCKDMKQRL (70 aa)).

It functions in the pathway protein modification; protein ubiquitination. In terms of biological role, may act as a substrate-specific adapter of an E3 ubiquitin-protein ligase complex (CUL3-RBX1-BTB) which mediates the ubiquitination and subsequent proteasomal degradation of target proteins. The sequence is that of BTB/POZ domain-containing protein At3g50780 from Arabidopsis thaliana (Mouse-ear cress).